We begin with the raw amino-acid sequence, 563 residues long: GTPase Obg (563 aa).

Residues 2–168 (SDFVDRVTVH…RDVILELKSI (167 aa)) enclose the Obg domain. The OBG-type G domain occupies 169 to 349 (ADVALVGFPS…LNFALSALVH (181 aa)). Residues 175–182 (GFPSAGKS), 200–204 (FTTLV), 221–224 (DVPG), 301–304 (NKID), and 330–332 (STA) contribute to the GTP site. Mg(2+) contacts are provided by Ser182 and Thr202. An OCT domain is found at 383–469 (DEGGSALEFT…ARMVEFDWDP (87 aa)). The interval 529 to 563 (RKAGHWADPTVDDDRHDETSLFGHGESSEDGETEE) is disordered.

Belongs to the TRAFAC class OBG-HflX-like GTPase superfamily. OBG GTPase family. In terms of assembly, monomer. Mg(2+) serves as cofactor.

The protein resides in the cytoplasm. Functionally, an essential GTPase which binds GTP, GDP and possibly (p)ppGpp with moderate affinity, with high nucleotide exchange rates and a fairly low GTP hydrolysis rate. Plays a role in control of the cell cycle, stress response, ribosome biogenesis and in those bacteria that undergo differentiation, in morphogenesis control. The polypeptide is GTPase Obg (Bifidobacterium longum (strain DJO10A)).